A 179-amino-acid polypeptide reads, in one-letter code: Large ribosomal subunit protein uL5 (179 aa).

Belongs to the universal ribosomal protein uL5 family. In terms of assembly, part of the 50S ribosomal subunit; part of the 5S rRNA/L5/L18/L25 subcomplex. Contacts the 5S rRNA and the P site tRNA. Forms a bridge to the 30S subunit in the 70S ribosome.

In terms of biological role, this is one of the proteins that bind and probably mediate the attachment of the 5S RNA into the large ribosomal subunit, where it forms part of the central protuberance. In the 70S ribosome it contacts protein S13 of the 30S subunit (bridge B1b), connecting the 2 subunits; this bridge is implicated in subunit movement. Contacts the P site tRNA; the 5S rRNA and some of its associated proteins might help stabilize positioning of ribosome-bound tRNAs. This is Large ribosomal subunit protein uL5 from Carboxydothermus hydrogenoformans (strain ATCC BAA-161 / DSM 6008 / Z-2901).